The sequence spans 268 residues: Exodeoxyribonuclease III (268 aa).

Residue E34 coordinates Mg(2+). Y109 is an active-site residue. Mg(2+)-binding residues include D151, N153, and D258. Catalysis depends on D151, which acts as the Proton donor/acceptor.

It belongs to the DNA repair enzymes AP/ExoA family. Monomer. The cofactor is Mg(2+). It depends on Mn(2+) as a cofactor.

It catalyses the reaction Exonucleolytic cleavage in the 3'- to 5'-direction to yield nucleoside 5'-phosphates.. Major apurinic-apyrimidinic endonuclease of E.coli. It removes the damaged DNA at cytosines and guanines by cleaving on the 3'-side of the AP site by a beta-elimination reaction. It exhibits 3'-5'-exonuclease, 3'-phosphomonoesterase, 3'-repair diesterase and ribonuclease H activities. The chain is Exodeoxyribonuclease III (xthA) from Salmonella typhi.